A 442-amino-acid chain; its full sequence is NADH-quinone oxidoreductase subunit D (442 aa).

Belongs to the complex I 49 kDa subunit family. As to quaternary structure, NDH-1 is composed of 14 different subunits. Subunits NuoB, C, D, E, F, and G constitute the peripheral sector of the complex.

The protein localises to the cell membrane. The enzyme catalyses a quinone + NADH + 5 H(+)(in) = a quinol + NAD(+) + 4 H(+)(out). In terms of biological role, NDH-1 shuttles electrons from NADH, via FMN and iron-sulfur (Fe-S) centers, to quinones in the respiratory chain. The immediate electron acceptor for the enzyme in this species is believed to be a menaquinone. Couples the redox reaction to proton translocation (for every two electrons transferred, four hydrogen ions are translocated across the cytoplasmic membrane), and thus conserves the redox energy in a proton gradient. The sequence is that of NADH-quinone oxidoreductase subunit D from Mycolicibacterium vanbaalenii (strain DSM 7251 / JCM 13017 / BCRC 16820 / KCTC 9966 / NRRL B-24157 / PYR-1) (Mycobacterium vanbaalenii).